We begin with the raw amino-acid sequence, 391 residues long: Formate-dependent phosphoribosylglycinamide formyltransferase (391 aa).

N(1)-(5-phospho-beta-D-ribosyl)glycinamide is bound by residues 20–21 (EL) and E80. ATP contacts are provided by residues R112, K153, 158 to 163 (SSGKGQ), 193 to 196 (EGFV), and E201. The ATP-grasp domain maps to 117-306 (RLAAETLGLP…EFALHVRAIL (190 aa)). Mg(2+)-binding residues include E265 and E277. N(1)-(5-phospho-beta-D-ribosyl)glycinamide is bound by residues D284, K354, and 361–362 (RR).

The protein belongs to the PurK/PurT family. As to quaternary structure, homodimer.

It catalyses the reaction N(1)-(5-phospho-beta-D-ribosyl)glycinamide + formate + ATP = N(2)-formyl-N(1)-(5-phospho-beta-D-ribosyl)glycinamide + ADP + phosphate + H(+). Its pathway is purine metabolism; IMP biosynthesis via de novo pathway; N(2)-formyl-N(1)-(5-phospho-D-ribosyl)glycinamide from N(1)-(5-phospho-D-ribosyl)glycinamide (formate route): step 1/1. Functionally, involved in the de novo purine biosynthesis. Catalyzes the transfer of formate to 5-phospho-ribosyl-glycinamide (GAR), producing 5-phospho-ribosyl-N-formylglycinamide (FGAR). Formate is provided by PurU via hydrolysis of 10-formyl-tetrahydrofolate. This Shewanella putrefaciens (strain CN-32 / ATCC BAA-453) protein is Formate-dependent phosphoribosylglycinamide formyltransferase.